The chain runs to 165 residues: Endoribonuclease YbeY (165 aa).

Positions 130, 134, and 140 each coordinate Zn(2+).

The protein belongs to the endoribonuclease YbeY family. Requires Zn(2+) as cofactor.

Its subcellular location is the cytoplasm. Its function is as follows. Single strand-specific metallo-endoribonuclease involved in late-stage 70S ribosome quality control and in maturation of the 3' terminus of the 16S rRNA. In Streptococcus pyogenes serotype M28 (strain MGAS6180), this protein is Endoribonuclease YbeY.